The following is a 404-amino-acid chain: Zinc metalloprotease Rip1 (404 aa).

A helical transmembrane segment spans residues 1-21; sequence MMFVTGIVLFALAILISVALH. Residue histidine 21 coordinates Zn(2+). The active site involves glutamate 22. Histidine 25 is a binding site for Zn(2+). Residues 104–124 form a helical membrane-spanning segment; sequence PGMNLAICLVLIYAIALVWGL. The region spanning 121-203 is the PDZ domain; it reads VWGLPNLHPP…SVPIVVERDG (83 aa). Aspartate 202 is a Zn(2+) binding site. 2 helical membrane-spanning segments follow: residues 313–333 and 373–393; these read LWVA…TINL and LLPA…LTVT.

It belongs to the peptidase M50B family. Zn(2+) is required as a cofactor.

The protein resides in the cell membrane. Functionally, a probable intramembrane site-2 protease (S2P) that cleaves type-2 transmembrane proteins within their membrane-spanning domains. Cleaves PbpB (PBP3, FtsI); cleavage is inhibited by Wag31-PbpB interaction. Probably also cleaves anti-sigma factors RskA, RslA and RsmA. Its function is as follows. Regulated intramembrane proteolysis (RIP) occurs when an extracytoplasmic signal (possibly oxidative stress) triggers a concerted proteolytic cascade to transmit information and elicit cellular responses. The membrane-spanning regulatory substrate protein (includes anti-sigma factors RskA, RslA, RsmA, and PbpB in M.tuberculosis) is first cut extracytoplasmically (site-1 protease, S1P), then within the membrane itself (site-2 protease, S2P, this entry), while cytoplasmic proteases finish degrading the regulatory protein, liberating the effector protein (ECF sigma factors SigK, SigL and SigM). The sequence is that of Zinc metalloprotease Rip1 (rip1) from Mycobacterium bovis (strain BCG / Pasteur 1173P2).